An 88-amino-acid chain; its full sequence is DNA-directed RNA polymerase subunit omega (88 aa).

It belongs to the RNA polymerase subunit omega family. In terms of assembly, the RNAP catalytic core consists of 2 alpha, 1 beta, 1 beta' and 1 omega subunit. When a sigma factor is associated with the core the holoenzyme is formed, which can initiate transcription.

It carries out the reaction RNA(n) + a ribonucleoside 5'-triphosphate = RNA(n+1) + diphosphate. Its function is as follows. Promotes RNA polymerase assembly. Latches the N- and C-terminal regions of the beta' subunit thereby facilitating its interaction with the beta and alpha subunits. The polypeptide is DNA-directed RNA polymerase subunit omega (Actinobacillus succinogenes (strain ATCC 55618 / DSM 22257 / CCUG 43843 / 130Z)).